The following is a 197-amino-acid chain: Large ribosomal subunit protein mL58 (197 aa).

Residues 1–20 (MLFTIKPSFLKPVGFIQTRN) constitute a mitochondrion transit peptide.

Belongs to the mitochondrion-specific ribosomal protein mL58 family. In terms of assembly, component of the mitochondrial large ribosomal subunit (mt-LSU). Mature yeast 74S mitochondrial ribosomes consist of a small (37S) and a large (54S) subunit. The 37S small subunit contains a 15S ribosomal RNA (15S mt-rRNA) and at least 32 different proteins. The 54S large subunit contains a 21S rRNA (21S mt-rRNA) and at least 45 different proteins.

Its subcellular location is the mitochondrion. Component of the mitochondrial ribosome (mitoribosome), a dedicated translation machinery responsible for the synthesis of mitochondrial genome-encoded proteins, including at least some of the essential transmembrane subunits of the mitochondrial respiratory chain. The mitoribosomes are attached to the mitochondrial inner membrane and translation products are cotranslationally integrated into the membrane. In Schizosaccharomyces pombe (strain 972 / ATCC 24843) (Fission yeast), this protein is Large ribosomal subunit protein mL58 (mrpl20).